The chain runs to 309 residues: Potassium channel subfamily K member 16 (309 aa).

The Cytoplasmic segment spans residues 1-13 (MPSAGLCSCWGGR). A helical transmembrane segment spans residues 14 to 34 (VLPLLLAYVCYLLLGATIFQL). Positions 98 to 116 (SFFFAGTVVTTIGYGNLAP) form an intramembrane region, pore-forming. K(+) contacts are provided by threonine 108, isoleucine 109, glycine 110, and tyrosine 111. The selectivity filter 1 stretch occupies residues 108 to 113 (TIGYGN). The helical transmembrane segment at 120–140 (AGQVFCVFYALLGIPLNVIFL) threads the bilayer. The Cytoplasmic portion of the chain corresponds to 141 to 165 (NHLGTGLRAHLAAIERWEDRPRRSQ). A helical transmembrane segment spans residues 166 to 186 (VLQVLGLALFLTLGTLVILIF). The pore-forming intramembrane region spans 202–221 (GFYFAFITLSTIGFGDYVVG). K(+) is bound by residues threonine 212, isoleucine 213, glycine 214, and phenylalanine 215. Residues 212 to 217 (TIGFGD) are selectivity filter 2. The chain crosses the membrane as a helical span at residues 238-258 (IWILLGLAWLALILPLGPLLL). Residues 259 to 309 (HRCCQLWLLSLRQGCGAKAAPGRRPRRGSTAARGVQVTPQDFPISKKGLGS) lie on the Cytoplasmic side of the membrane.

The protein belongs to the two pore domain potassium channel (TC 1.A.1.8) family. As to quaternary structure, homodimer; disulfide-linked. Heterodimer with KCNK17 and KCNK5. Highly expressed in pancreas, in both endocrine (alpha, beta, gamma, delta, and epsilon) and exocrine (acinar and ductal) cells. Expressed in pacreatic beta-cells (at protein level). Expressed in pacreatic delta-cells (at protein level). Not detectable in the other tissues tested.

It localises to the endoplasmic reticulum membrane. The protein localises to the cell membrane. The protein resides in the mitochondrion inner membrane. The enzyme catalyses K(+)(in) = K(+)(out). It carries out the reaction Rb(+)(in) = Rb(+)(out). It catalyses the reaction Cs(+)(in) = Cs(+)(out). With respect to regulation, the channel conductance is stimulated by extracellular alkaline pH. Inhibited by Ba(2+) ions, quinine, quinidine, chloroform and halothane. Its function is as follows. K(+) channel that conducts voltage-dependent outward rectifying currents upon membrane depolarization. Voltage sensing is coupled to K(+) electrochemical gradient in an 'ion flux gating' mode where outward but not inward ion flow opens the gate. Homo- and heterodimerizes to form functional channels with distinct regulatory and gating properties. In pancreatic islets, conducts K(+) countercurrents for Ca(2+) release from the endoplasmic reticulum (ER) and regulates the frequency and duration of cytosolic Ca(2+) oscillations coupled to secretion of pancreatic hormones. In pancreatic beta cells, drives ER Ca(2+) efflux, which in turn activates Ca(2+)-dependent plasma membrane K(+) slow currents and cytosolic Ca(2+) influx, overall contributing to synchronous cytosolic Ca(2+) oscillations. Limits glucose-induced cytosolic Ca(2+) oscillations coupled to second-phase INS secretion. Contributes to beta cell adaptation to acute inflammation by maintaining normal cytosolic Ca(2+) levels and INS secretion. May regulate beta cell mitochondrial Ca(2+) levels either indirectly via ER Ca(2+) efflux or directly by hyperpolarizing the mitochondrial membrane potential. Limits mitochondrial Ca(2+) oscillations and ATP production involved in glucose homeostasis upon metabolic stress. In pancreatic delta cells, limits Ca(2+)-induced Ca(2+)-release involved in somatostatin secretion and modulates islet paracrine signaling involved in glucagon secretion. Permeable to other monovalent cations such as Rb(+) and Cs(+). This Homo sapiens (Human) protein is Potassium channel subfamily K member 16.